The following is a 503-amino-acid chain: D-alanine--D-alanyl carrier protein ligase (503 aa).

151–152 (TS) is a binding site for ATP. Asp196 is a D-alanine binding site. 291-296 (NTYGPT) lines the ATP pocket. Val300 lines the D-alanine pocket. ATP is bound by residues Asp382, 393–396 (YNGR), and Lys491. Lys491 lines the D-alanine pocket.

It belongs to the ATP-dependent AMP-binding enzyme family. DltA subfamily.

Its subcellular location is the cytoplasm. The catalysed reaction is holo-[D-alanyl-carrier protein] + D-alanine + ATP = D-alanyl-[D-alanyl-carrier protein] + AMP + diphosphate. It functions in the pathway cell wall biogenesis; lipoteichoic acid biosynthesis. Its function is as follows. Catalyzes the first step in the D-alanylation of lipoteichoic acid (LTA), the activation of D-alanine and its transfer onto the D-alanyl carrier protein (Dcp) DltC. In an ATP-dependent two-step reaction, forms a high energy D-alanyl-AMP intermediate, followed by transfer of the D-alanyl residue as a thiol ester to the phosphopantheinyl prosthetic group of the Dcp. D-alanylation of LTA plays an important role in modulating the properties of the cell wall in Gram-positive bacteria, influencing the net charge of the cell wall. In Bacillus anthracis (strain A0248), this protein is D-alanine--D-alanyl carrier protein ligase.